Here is a 512-residue protein sequence, read N- to C-terminus: Alpha-amylase (512 aa).

The signal sequence occupies residues 1-29; it reads MKQQKRLYARLLTLLFALIFLLPHSAAAA. Residues asparagine 133, aspartate 190, alanine 210, aspartate 212, aspartate 223, aspartate 229, aspartate 231, and aspartate 233 each coordinate Ca(2+). Aspartate 190 contributes to the Na(+) binding site. Na(+) is bound by residues aspartate 212, aspartate 223, and aspartate 229. The active-site Nucleophile is aspartate 260. Histidine 264 is a Ca(2+) binding site. Glutamate 290 functions as the Proton donor in the catalytic mechanism. Ca(2+)-binding residues include glycine 329, tyrosine 331, histidine 435, aspartate 436, and aspartate 459.

It belongs to the glycosyl hydrolase 13 family. As to quaternary structure, monomer. Ca(2+) serves as cofactor. Requires Na(+) as cofactor.

The protein localises to the secreted. It catalyses the reaction Endohydrolysis of (1-&gt;4)-alpha-D-glucosidic linkages in polysaccharides containing three or more (1-&gt;4)-alpha-linked D-glucose units.. This Bacillus licheniformis protein is Alpha-amylase (amyS).